The primary structure comprises 683 residues: Synaptic vesicle glycoprotein 2B (683 aa).

Over residues 1 to 10 (MDDYRYRDNY) the composition is skewed to basic and acidic residues. The disordered stretch occupies residues 1-72 (MDDYRYRDNY…QTKMAPSRAD (72 aa)). At 1–110 (MDDYRYRDNY…ECGHGRFQWT (110 aa)) the chain is on the cytoplasmic side. Ser33 is modified (phosphoserine). Thr36 bears the Phosphothreonine mark. The chain crosses the membrane as a helical span at residues 111–131 (LFFVLVLALMADGVEVFVVSF). The Extracellular segment spans residues 132–148 (ALPSAEKDMCLSSSKKG). A helical transmembrane segment spans residues 149–169 (MLGLIVYLGMMAGAFILGGLA). Topologically, residues 170–182 (DKLGRKKVLSMSL) are cytoplasmic. The helical transmembrane segment at 183-203 (AINASFASLSSFVQGYGAFLF) threads the bilayer. Residues 204 to 205 (CR) are Extracellular-facing. Residues 206–226 (LISGIGIGGSLPIVFAYFSEF) traverse the membrane as a helical segment. The Cytoplasmic portion of the chain corresponds to 227–237 (LSREKRGEHLS). Residues 238–258 (WLGIFWMTGGIYASAMAWSII) form a helical membrane-spanning segment. The Extracellular segment spans residues 259–277 (PHYGWGFSMGTNYHFHSWR). Residues 278–298 (VFVIVCALPATVSMVALKFMP) traverse the membrane as a helical segment. Over 299 to 390 (ESPRFLLEMG…CVMGPYRMNT (92 aa)) the chain is Cytoplasmic. Residues 391 to 411 (LILAVVWFTMALSYYGLTVWF) traverse the membrane as a helical segment. Residues 412–535 (PDMIRYFQDE…CHMDFEEDND (124 aa)) are Extracellular-facing. Tyr423 is subject to Phosphotyrosine. Asn441, Asn491, and Asn516 each carry an N-linked (GlcNAc...) asparagine glycan. Residues 536 to 556 (FLIYLVSFLGSLSVLPGNIIS) traverse the membrane as a helical segment. Over 557-565 (ALLMDRIGR) the chain is Cytoplasmic. The helical transmembrane segment at 566-586 (LKMIGGSMLISAVCCFFLFFG) threads the bilayer. Residues 587–592 (NSESAM) are Extracellular-facing. The helical transmembrane segment at 593–613 (IGWQCLFCGTSIAAWNALDVI) threads the bilayer. Residues 614 to 626 (TVELYPTNQRATA) lie on the Cytoplasmic side of the membrane. The helical transmembrane segment at 627–649 (FGILNGLCKLGAILGNTIFASFV) threads the bilayer. Over 650-653 (GITK) the chain is Extracellular. Residues 654 to 672 (VVPILLAAASLVGGGLVAL) traverse the membrane as a helical segment. Over 673 to 683 (RLPETREQVLM) the chain is Cytoplasmic.

It belongs to the major facilitator superfamily. Interacts with SYT1 in a calcium-independent manner. Forms a complex with SYT1, syntaxin-1 and SNAP25. As to quaternary structure, (Microbial infection) Interacts with C.botulinum neurotoxin type A1 and type A2 (BoNT/A, botA). Interaction is improved by glycosylation of SV2. In terms of assembly, (Microbial infection) Interacts with C.botulinum neurotoxin type D (BoNT/D, botD). (Microbial infection) Interacts with C.botulinum neurotoxin type E (BoNT/E). Interaction requires glycosylation of SV2 proteins. As to quaternary structure, (Microbial infection) Interacts with C.botulinum neurotoxin type F (BoNT/F). Interaction requires glycosylation of SV2 proteins. In terms of processing, N-glycosylated. The N-terminal cytoplasmic domain is phosphorylated by CK1. In terms of tissue distribution, widely expressed throughout the brain. Specifically expressed by pinealocytes in the pineal gland. Also detected in testis (at protein level). Specifically expressed in neural tissues. Expressed in the spinal cord and in all brain regions with a stronger expression in hippocampus and cortex.

It is found in the cytoplasmic vesicle. The protein localises to the secretory vesicle. It localises to the synaptic vesicle membrane. The protein resides in the acrosome. In terms of biological role, probably plays a role in the control of regulated secretion in neural and endocrine cells. Functionally, (Microbial infection) Receptor for C.botulinum neurotoxin type A (BoNT/A, botA); the toxin binds via extracellular loop 4. Restores uptake of BoNT/A in mouse and rat cells that are deleted for SV2 receptor. Glycosylation of SV2B is not essential for receptor activity, but enhances the interaction. Also serves as a receptor for the closely related C.botulinum neurotoxin type A2; glycosylation is not essential but enhances the interaction. (Microbial infection) Possible receptor for C.botulinum neurotoxin type D (BoNT/D, botD); BoNT/D does not bind to extracellular loop 4 as do BoNT/A and BoNT/E. Another group does not find a convincing interaction with SV2. Its function is as follows. (Microbial infection) Receptor for C.botulinum neurotoxin type E (BoNT/E); the toxin probably binds via extracellular loop 4. Restores uptake of BoNT/E in mouse cells that are deleted for SV2 receptor. Glycosylation of SV2B is not essential for receptor activity, but enhances the interaction. In terms of biological role, (Microbial infection) Receptor for C.botulinum neurotoxin type F (BoNT/F); binding requires glycosylation of this protein. In Rattus norvegicus (Rat), this protein is Synaptic vesicle glycoprotein 2B (Sv2b).